The sequence spans 133 residues: Ribosome-binding factor A (133 aa).

Belongs to the RbfA family. In terms of assembly, monomer. Binds 30S ribosomal subunits, but not 50S ribosomal subunits or 70S ribosomes.

Its subcellular location is the cytoplasm. One of several proteins that assist in the late maturation steps of the functional core of the 30S ribosomal subunit. Associates with free 30S ribosomal subunits (but not with 30S subunits that are part of 70S ribosomes or polysomes). Required for efficient processing of 16S rRNA. May interact with the 5'-terminal helix region of 16S rRNA. The sequence is that of Ribosome-binding factor A from Pseudomonas fluorescens (strain Pf0-1).